We begin with the raw amino-acid sequence, 529 residues long: Peptide chain release factor 3 (529 aa).

Residues 11 to 280 enclose the tr-type G domain; the sequence is AKRRTFAIIS…GLVEWAPAPM (270 aa). GTP is bound by residues 20 to 27, 88 to 92, and 142 to 145; these read SHPDAGKT, DTPGH, and NKLD.

The protein belongs to the TRAFAC class translation factor GTPase superfamily. Classic translation factor GTPase family. PrfC subfamily.

The protein resides in the cytoplasm. Its function is as follows. Increases the formation of ribosomal termination complexes and stimulates activities of RF-1 and RF-2. It binds guanine nucleotides and has strong preference for UGA stop codons. It may interact directly with the ribosome. The stimulation of RF-1 and RF-2 is significantly reduced by GTP and GDP, but not by GMP. In Shigella flexneri serotype 5b (strain 8401), this protein is Peptide chain release factor 3.